A 502-amino-acid chain; its full sequence is Glycerol kinase (502 aa).

Thr-14 contributes to the ADP binding site. The ATP site is built by Thr-14 and Thr-15. Thr-14 is a binding site for sn-glycerol 3-phosphate. Arg-18 lines the ADP pocket. Arg-84, Glu-85, Tyr-136, and Asp-245 together coordinate sn-glycerol 3-phosphate. Arg-84, Glu-85, Tyr-136, Asp-245, and Gln-246 together coordinate glycerol. ADP is bound by residues Thr-267 and Gly-314. Residues Thr-267, Gly-314, Gln-318, and Gly-415 each contribute to the ATP site. Residues Gly-415 and Asn-419 each contribute to the ADP site.

It belongs to the FGGY kinase family.

It catalyses the reaction glycerol + ATP = sn-glycerol 3-phosphate + ADP + H(+). It participates in polyol metabolism; glycerol degradation via glycerol kinase pathway; sn-glycerol 3-phosphate from glycerol: step 1/1. Its activity is regulated as follows. Inhibited by fructose 1,6-bisphosphate (FBP). Functionally, key enzyme in the regulation of glycerol uptake and metabolism. Catalyzes the phosphorylation of glycerol to yield sn-glycerol 3-phosphate. This chain is Glycerol kinase, found in Acaryochloris marina (strain MBIC 11017).